The sequence spans 257 residues: S-methyl-5'-thioadenosine phosphorylase (257 aa).

Phosphate is bound by residues S10 and 50-51 (RH). M180 lines the substrate pocket. Residue T181 coordinates phosphate. 204 to 206 (DYD) provides a ligand contact to substrate.

Belongs to the PNP/MTAP phosphorylase family. MTAP subfamily. As to quaternary structure, homohexamer. Dimer of a homotrimer.

The catalysed reaction is S-methyl-5'-thioadenosine + phosphate = 5-(methylsulfanyl)-alpha-D-ribose 1-phosphate + adenine. It participates in amino-acid biosynthesis; L-methionine biosynthesis via salvage pathway; S-methyl-5-thio-alpha-D-ribose 1-phosphate from S-methyl-5'-thioadenosine (phosphorylase route): step 1/1. In terms of biological role, catalyzes the reversible phosphorylation of S-methyl-5'-thioadenosine (MTA) to adenine and 5-methylthioribose-1-phosphate. Involved in the breakdown of MTA, a major by-product of polyamine biosynthesis. Responsible for the first step in the methionine salvage pathway after MTA has been generated from S-adenosylmethionine. Has broad substrate specificity with 6-aminopurine nucleosides as preferred substrates. The chain is S-methyl-5'-thioadenosine phosphorylase (mntP) from Pyrococcus abyssi (strain GE5 / Orsay).